We begin with the raw amino-acid sequence, 470 residues long: Nitric oxide synthase, inducible (470 aa).

Residues tryptophan 2, tyrosine 3, and glutamate 7 each coordinate L-arginine. 3 residues coordinate (6R)-L-erythro-5,6,7,8-tetrahydrobiopterin: arginine 11, tryptophan 93, and phenylalanine 106. A heme b-binding site is contributed by tyrosine 121. The interval 145–165 (FKAVARAALFSSTLMSRVLAN) is calmodulin-binding. Positions 169–307 (CTVLYATETG…AFSAWALTAL (139 aa)) constitute a Flavodoxin-like domain. The FMN site is built by threonine 175, glutamate 176, threonine 177, lysine 179, serine 180, serine 221, threonine 222, serine 258, cysteine 265, glutamate 291, and glutamine 295. Position 380 (arginine 380) interacts with NADP(+). Residue histidine 403 participates in FAD binding. Position 440 (threonine 440) interacts with NADP(+).

The protein belongs to the NOS family. In terms of assembly, homodimer. It depends on heme b as a cofactor. FAD serves as cofactor. FMN is required as a cofactor. Requires (6R)-L-erythro-5,6,7,8-tetrahydrobiopterin as cofactor.

It is found in the cytoplasm. The protein resides in the cytosol. The enzyme catalyses 2 L-arginine + 3 NADPH + 4 O2 + H(+) = 2 L-citrulline + 2 nitric oxide + 3 NADP(+) + 4 H2O. Not stimulated by calcium/calmodulin. Its function is as follows. Produces nitric oxide (NO) which is a messenger molecule with diverse functions throughout the body. In macrophages, NO mediates tumoricidal and bactericidal actions. Also has nitrosylase activity and mediates cysteine S-nitrosylation of cytoplasmic target proteins such COX2. The sequence is that of Nitric oxide synthase, inducible (nos2) from Oncorhynchus mykiss (Rainbow trout).